Here is a 109-residue protein sequence, read N- to C-terminus: NADH-quinone oxidoreductase subunit K (109 aa).

Helical transmembrane passes span 12 to 32 (LNHY…GLFM), 40 to 60 (ILMS…AFSV), and 72 to 92 (IIIL…LLIY).

Belongs to the complex I subunit 4L family. In terms of assembly, NDH-1 is composed of 14 different subunits. Subunits NuoA, H, J, K, L, M, N constitute the membrane sector of the complex.

It is found in the cell inner membrane. The catalysed reaction is a quinone + NADH + 5 H(+)(in) = a quinol + NAD(+) + 4 H(+)(out). Functionally, NDH-1 shuttles electrons from NADH, via FMN and iron-sulfur (Fe-S) centers, to quinones in the respiratory chain. The immediate electron acceptor for the enzyme in this species is believed to be ubiquinone. Couples the redox reaction to proton translocation (for every two electrons transferred, four hydrogen ions are translocated across the cytoplasmic membrane), and thus conserves the redox energy in a proton gradient. This chain is NADH-quinone oxidoreductase subunit K, found in Rickettsia bellii (strain RML369-C).